A 110-amino-acid polypeptide reads, in one-letter code: Large ribosomal subunit protein uL22 (110 aa).

It belongs to the universal ribosomal protein uL22 family. As to quaternary structure, part of the 50S ribosomal subunit.

In terms of biological role, this protein binds specifically to 23S rRNA; its binding is stimulated by other ribosomal proteins, e.g. L4, L17, and L20. It is important during the early stages of 50S assembly. It makes multiple contacts with different domains of the 23S rRNA in the assembled 50S subunit and ribosome. Its function is as follows. The globular domain of the protein is located near the polypeptide exit tunnel on the outside of the subunit, while an extended beta-hairpin is found that lines the wall of the exit tunnel in the center of the 70S ribosome. This chain is Large ribosomal subunit protein uL22, found in Desulfotalea psychrophila (strain LSv54 / DSM 12343).